The primary structure comprises 463 residues: UDP-N-acetylmuramate--L-alanine ligase (463 aa).

G112–T118 provides a ligand contact to ATP.

The protein belongs to the MurCDEF family.

The protein localises to the cytoplasm. The enzyme catalyses UDP-N-acetyl-alpha-D-muramate + L-alanine + ATP = UDP-N-acetyl-alpha-D-muramoyl-L-alanine + ADP + phosphate + H(+). It participates in cell wall biogenesis; peptidoglycan biosynthesis. Its function is as follows. Cell wall formation. The sequence is that of UDP-N-acetylmuramate--L-alanine ligase from Thiobacillus denitrificans (strain ATCC 25259 / T1).